The primary structure comprises 117 residues: Immunoglobulin heavy variable 3-5 (117 aa).

The signal sequence occupies residues 1–18 (MKMFTLLYLLTVVPGILS). An Ig-like domain is found at 19 to 117 (DVQLQESGPG…EDTATYYCAR (99 aa)). Cysteines 40 and 115 form a disulfide.

This is Immunoglobulin heavy variable 3-5 from Mus musculus (Mouse).